We begin with the raw amino-acid sequence, 277 residues long: Large ribosomal subunit protein uL2 (277 aa).

The disordered stretch occupies residues arginine 219–lysine 277. Positions aspartate 231–lysine 241 are enriched in basic and acidic residues. Positions lysine 256–lysine 277 are enriched in basic residues.

It belongs to the universal ribosomal protein uL2 family. Part of the 50S ribosomal subunit. Forms a bridge to the 30S subunit in the 70S ribosome.

One of the primary rRNA binding proteins. Required for association of the 30S and 50S subunits to form the 70S ribosome, for tRNA binding and peptide bond formation. It has been suggested to have peptidyltransferase activity; this is somewhat controversial. Makes several contacts with the 16S rRNA in the 70S ribosome. The polypeptide is Large ribosomal subunit protein uL2 (Campylobacter concisus (strain 13826)).